Reading from the N-terminus, the 268-residue chain is tRNA (guanine-N(1)-)-methyltransferase (268 aa).

S-adenosyl-L-methionine-binding positions include Gly-110 and 129–134; that span reads IGDFVM. A disordered region spans residues 246-268; that stretch reads WGAPPAPVKRHRKRRPETTESAS.

The protein belongs to the RNA methyltransferase TrmD family. As to quaternary structure, homodimer.

The protein resides in the cytoplasm. The enzyme catalyses guanosine(37) in tRNA + S-adenosyl-L-methionine = N(1)-methylguanosine(37) in tRNA + S-adenosyl-L-homocysteine + H(+). Specifically methylates guanosine-37 in various tRNAs. This chain is tRNA (guanine-N(1)-)-methyltransferase, found in Deinococcus deserti (strain DSM 17065 / CIP 109153 / LMG 22923 / VCD115).